Reading from the N-terminus, the 356-residue chain is Phosphate acyltransferase (356 aa).

The protein belongs to the PlsX family. Homodimer. Probably interacts with PlsY.

The protein localises to the cytoplasm. The enzyme catalyses a fatty acyl-[ACP] + phosphate = an acyl phosphate + holo-[ACP]. The protein operates within lipid metabolism; phospholipid metabolism. Its function is as follows. Catalyzes the reversible formation of acyl-phosphate (acyl-PO(4)) from acyl-[acyl-carrier-protein] (acyl-ACP). This enzyme utilizes acyl-ACP as fatty acyl donor, but not acyl-CoA. In Shigella sonnei (strain Ss046), this protein is Phosphate acyltransferase.